The sequence spans 401 residues: Phosphoglycerate kinase (401 aa).

Residues 23-25 (DFN), R39, 62-65 (HLGR), R121, and R154 each bind substrate. ATP is bound by residues K207, G298, E329, and 355 to 358 (GGDT).

Belongs to the phosphoglycerate kinase family. Monomer.

It is found in the cytoplasm. The enzyme catalyses (2R)-3-phosphoglycerate + ATP = (2R)-3-phospho-glyceroyl phosphate + ADP. The protein operates within carbohydrate degradation; glycolysis; pyruvate from D-glyceraldehyde 3-phosphate: step 2/5. This chain is Phosphoglycerate kinase, found in Campylobacter fetus subsp. fetus (strain 82-40).